The following is a 778-amino-acid chain: Tubulin polyglutamylase ttll6 (778 aa).

A disordered region spans residues 1–43 (MGTPAERSVSEVCRCEPDPGLEGEGWGSDTHAEPSNTPIPLPV). The TTL domain occupies 51–393 (KKKLWINLTN…LGACDRRKIT (343 aa)). ATP-binding positions include Lys168, 174–175 (QG), 196–199 (QVYM), and 209–211 (KFD). Gln174 is a binding site for a protein. Arg235 contacts L-glutamate. 257–258 (TN) lines the ATP pocket. Tyr259 and Lys277 together coordinate L-glutamate. Positions 340, 353, and 355 each coordinate Mg(2+). Position 356 (His356) interacts with a protein. Positions 365–445 (RLDREVKDSL…MGGFRRIFPR (81 aa)) are c-MTBD region. Lys371 is a binding site for L-glutamate. Composition is skewed to basic and acidic residues over residues 402–418 (ERLQ…EEPR), 485–510 (KQEQ…GEKV), 533–542 (SVREETPVSL), and 760–778 (LSHD…EHSL). 3 disordered regions span residues 402 to 422 (ERLQ…QSQA), 485 to 542 (KQEQ…PVSL), and 758 to 778 (PHLS…EHSL).

This sequence belongs to the tubulin--tyrosine ligase family. Requires Mg(2+) as cofactor.

The protein resides in the cytoplasm. It localises to the cytoskeleton. The protein localises to the cilium axoneme. Its subcellular location is the cilium basal body. It carries out the reaction L-glutamyl-[protein] + L-glutamate + ATP = gamma-L-glutamyl-L-glutamyl-[protein] + ADP + phosphate + H(+). The enzyme catalyses (L-glutamyl)(n)-gamma-L-glutamyl-L-glutamyl-[protein] + L-glutamate + ATP = (L-glutamyl)(n+1)-gamma-L-glutamyl-L-glutamyl-[protein] + ADP + phosphate + H(+). Functionally, polyglutamylase which modifies both tubulin and non-tubulin proteins, generating alpha-linked polyglutamate side chains on the gamma-carboxyl group of specific glutamate residues of target proteins. Preferentially mediates ATP-dependent long polyglutamate chain elongation over the initiation step of the polyglutamylation reaction. Preferentially modifies the alpha-tubulin tail over a beta-tail. Mediates microtubule polyglutamylation in cilia axoneme, which is important for ciliary structural formation and motility. Polyglutamylates olfactory cilia, necessary for the regulation of ciliary structure and beating. This chain is Tubulin polyglutamylase ttll6, found in Danio rerio (Zebrafish).